We begin with the raw amino-acid sequence, 251 residues long: uncharacterized protein (251 aa).

Positions 6, 8, 90, 130, 154, and 202 each coordinate a divalent metal cation.

It belongs to the metallo-dependent hydrolases superfamily. TatD-type hydrolase family. A divalent metal cation serves as cofactor.

This is an uncharacterized protein from Haemophilus influenzae (strain ATCC 51907 / DSM 11121 / KW20 / Rd).